Consider the following 313-residue polypeptide: Methionyl-tRNA formyltransferase (313 aa).

111-114 (SLLP) contacts (6S)-5,6,7,8-tetrahydrofolate.

The protein belongs to the Fmt family.

It catalyses the reaction L-methionyl-tRNA(fMet) + (6R)-10-formyltetrahydrofolate = N-formyl-L-methionyl-tRNA(fMet) + (6S)-5,6,7,8-tetrahydrofolate + H(+). Attaches a formyl group to the free amino group of methionyl-tRNA(fMet). The formyl group appears to play a dual role in the initiator identity of N-formylmethionyl-tRNA by promoting its recognition by IF2 and preventing the misappropriation of this tRNA by the elongation apparatus. This is Methionyl-tRNA formyltransferase from Mesoplasma florum (strain ATCC 33453 / NBRC 100688 / NCTC 11704 / L1) (Acholeplasma florum).